A 419-amino-acid chain; its full sequence is E3 ubiquitin-protein ligase pellino homolog 2 (419 aa).

Residues 15-202 (EPVKYRELVV…HPQGGFTEES (188 aa)) form the FHA; atypical domain.

It belongs to the pellino family. In terms of assembly, interacts with TRAF6, IRAK4 and MAP3K7. Interacts with IRAK1. Interacts with BCL10; this interaction is impaired by SOCS3. Phosphorylated by IRAK1 and IRAK4 enhancing its E3 ligase activity. In terms of tissue distribution, widely expressed both in embryos and adult. Weakly or not expressed in spleen and thymus.

It carries out the reaction S-ubiquitinyl-[E2 ubiquitin-conjugating enzyme]-L-cysteine + [acceptor protein]-L-lysine = [E2 ubiquitin-conjugating enzyme]-L-cysteine + N(6)-ubiquitinyl-[acceptor protein]-L-lysine.. It functions in the pathway protein modification; protein ubiquitination. Functionally, E3 ubiquitin ligase catalyzing the covalent attachment of ubiquitin moieties onto substrate proteins. Involved in the TLR and IL-1 signaling pathways via interaction with the complex containing IRAK kinases and TRAF6. Mediates IL1B-induced IRAK1 'Lys-63'-linked polyubiquitination and possibly 'Lys-48'-linked ubiquitination. May be important for LPS- and IL1B-induced MAP3K7-dependent, but not MAP3K3-dependent, NF-kappa-B activation. Can activate the MAP (mitogen activated protein) kinase pathway leading to activation of ELK1. This Mus musculus (Mouse) protein is E3 ubiquitin-protein ligase pellino homolog 2 (Peli2).